The primary structure comprises 956 residues: Golgin candidate 5 (956 aa).

Disordered regions lie at residues 70–230 and 278–298; these read MSFM…QHKI and IFES…SSDE. Composition is skewed to basic and acidic residues over residues 77 to 89 and 118 to 129; these read SDEK…DSVR and ANKETNVRREAD. Polar residues-rich tracts occupy residues 160-177 and 184-193; these read EYSL…SLQP and TASQDSQPEQ. Basic and acidic residues predominate over residues 206–219; sequence SEAKEVTVENKDTV. A coiled-coil region spans residues 333–765; the sequence is SDSADVILEL…LIQKDLEREK (433 aa). S793 carries the post-translational modification Phosphoserine. The stretch at 851–951 forms a coiled coil; sequence SAYEATLRQK…EMYREQVNML (101 aa).

In terms of assembly, interacts with RABH1B and RABH1C, but not with RABD1 or RABD2A.

Its subcellular location is the golgi apparatus. The protein resides in the cytoplasm. Golgi matrix protein playing a role in tethering of vesicles to Golgi membranes and in maintaining the overall structure of the Golgi apparatus. This Arabidopsis thaliana (Mouse-ear cress) protein is Golgin candidate 5 (GC5).